A 252-amino-acid polypeptide reads, in one-letter code: Chitooligosaccharide deacetylase (252 aa).

Residues His61 and His125 each contribute to the Mg(2+) site.

It belongs to the YdjC deacetylase family. ChbG subfamily. As to quaternary structure, homodimer. The cofactor is Mg(2+).

The protein localises to the cytoplasm. The enzyme catalyses N,N'-diacetylchitobiose + H2O = N-acetyl-beta-D-glucosaminyl-(1-&gt;4)-D-glucosamine + acetate. It catalyses the reaction diacetylchitobiose-6'-phosphate + H2O = N'-monoacetylchitobiose-6'-phosphate + acetate. It participates in glycan degradation; chitin degradation. Functionally, involved in the degradation of chitin. ChbG is essential for growth on the acetylated chitooligosaccharides chitobiose and chitotriose but is dispensable for growth on cellobiose and chitosan dimer, the deacetylated form of chitobiose. Deacetylation of chitobiose-6-P and chitotriose-6-P is necessary for both the activation of the chb promoter by the regulatory protein ChbR and the hydrolysis of phosphorylated beta-glucosides by the phospho-beta-glucosidase ChbF. Catalyzes the removal of only one acetyl group from chitobiose-6-P to yield monoacetylchitobiose-6-P, the inducer of ChbR and the substrate of ChbF. The polypeptide is Chitooligosaccharide deacetylase (Escherichia coli O139:H28 (strain E24377A / ETEC)).